Consider the following 87-residue polypeptide: Acylphosphatase (87 aa).

The Acylphosphatase-like domain occupies Arg-2–Tyr-87. Residues Arg-17 and Asn-35 contribute to the active site.

It belongs to the acylphosphatase family.

The enzyme catalyses an acyl phosphate + H2O = a carboxylate + phosphate + H(+). The sequence is that of Acylphosphatase (acyP) from Deinococcus radiodurans (strain ATCC 13939 / DSM 20539 / JCM 16871 / CCUG 27074 / LMG 4051 / NBRC 15346 / NCIMB 9279 / VKM B-1422 / R1).